We begin with the raw amino-acid sequence, 179 residues long: MSEKDFVQVAKLGKTVGLKGYVKLHNLSDFSSQFKKDATFFIKNTKEMLKIKHYNANNSTVLFENYEDIEKAKELTNLILFQSIEKSRQTCKLKKDEFFYFDILECEVFEEDKRLGKVVDILETGASYLFEIQSDEKWVEKKYPKIFFIPYLDKFVKNIDIEKRQIFCTQDAFLILENS.

Positions 95–174 constitute a PRC barrel domain; that stretch reads KDEFFYFDIL…QIFCTQDAFL (80 aa).

The protein belongs to the RimM family. Binds ribosomal protein uS19.

Its subcellular location is the cytoplasm. Its function is as follows. An accessory protein needed during the final step in the assembly of 30S ribosomal subunit, possibly for assembly of the head region. Essential for efficient processing of 16S rRNA. May be needed both before and after RbfA during the maturation of 16S rRNA. It has affinity for free ribosomal 30S subunits but not for 70S ribosomes. This chain is Ribosome maturation factor RimM, found in Campylobacter jejuni subsp. jejuni serotype O:2 (strain ATCC 700819 / NCTC 11168).